The chain runs to 151 residues: Small ribosomal subunit protein uS19 (151 aa).

The protein belongs to the universal ribosomal protein uS19 family.

Protein S19 forms a complex with S13 that binds strongly to the 16S ribosomal RNA. The polypeptide is Small ribosomal subunit protein uS19 (rps19) (Thermoplasma acidophilum (strain ATCC 25905 / DSM 1728 / JCM 9062 / NBRC 15155 / AMRC-C165)).